The sequence spans 387 residues: Patatin-13 (387 aa).

The N-terminal stretch at 1 to 23 (MATTKSVLVLIFMILATTSSTFA) is a signal peptide. Residues 32-230 (LSVDGGGIKG…TVADPALLSV (199 aa)) enclose the PNPLA domain. Positions 36 to 41 (GGGIKG) match the GXGXXG motif. The GXSXG signature appears at 75 to 79 (GTSTG). Serine 77 serves as the catalytic Nucleophile. N-linked (GlcNAc...) asparagine glycosylation is found at asparagine 115 and asparagine 203. The active-site Proton acceptor is aspartate 216. Positions 216–218 (DGA) match the DGA/G motif. The stretch at 361–385 (ETYEEALKRFAKLLSDRKKLRANKA) forms a coiled coil.

This sequence belongs to the patatin family. As to expression, tuber.

It localises to the vacuole. Its function is as follows. Probable lipolytic acyl hydrolase (LAH), an activity which is thought to be involved in the response of tubers to pathogens. The sequence is that of Patatin-13 from Solanum tuberosum (Potato).